A 271-amino-acid polypeptide reads, in one-letter code: MNRIQQTFAALAEQGRKGLIPFITAGDPDPAKTVEFMHALAEGGADVIELGVPFSDPMADGPVIQRSSERALARGVTLKSVLADVKRFRETDPKTPVVLMGYANPIERMGVDTFAAEAQAAGVDGVLVVDYPPEEAGVFAEKMRAAQIDPIFLLAPTSTDERIADVGKIASGYVYYVSLKGVTGAGNLDVSSIAGKIPAIKSRVPVPVGVGFGIRDAETARAVAEVSDAVVIGSRLVQLLESAAPEGAAAALKTFIAELRAALDGAGKTAR.

Residues E49 and D60 each act as proton acceptor in the active site.

It belongs to the TrpA family. In terms of assembly, tetramer of two alpha and two beta chains.

It carries out the reaction (1S,2R)-1-C-(indol-3-yl)glycerol 3-phosphate + L-serine = D-glyceraldehyde 3-phosphate + L-tryptophan + H2O. It participates in amino-acid biosynthesis; L-tryptophan biosynthesis; L-tryptophan from chorismate: step 5/5. Functionally, the alpha subunit is responsible for the aldol cleavage of indoleglycerol phosphate to indole and glyceraldehyde 3-phosphate. The chain is Tryptophan synthase alpha chain from Burkholderia lata (strain ATCC 17760 / DSM 23089 / LMG 22485 / NCIMB 9086 / R18194 / 383).